The primary structure comprises 270 residues: tRNA pseudouridine synthase A (270 aa).

The active-site Nucleophile is Asp-51. Tyr-109 serves as a coordination point for substrate.

This sequence belongs to the tRNA pseudouridine synthase TruA family. In terms of assembly, homodimer.

The catalysed reaction is uridine(38/39/40) in tRNA = pseudouridine(38/39/40) in tRNA. Formation of pseudouridine at positions 38, 39 and 40 in the anticodon stem and loop of transfer RNAs. The polypeptide is tRNA pseudouridine synthase A (Burkholderia multivorans (strain ATCC 17616 / 249)).